The chain runs to 135 residues: MPVDFTGYWKMLANENFEEYLRALDVNVALRKIANLLKPDKEIVQEGDHMIIRTLSTFRNYIMDFQVGKEFEEDLTGIDDRKCMTTVSWDGDKLECVQKGEKEGRGWTQWIEGDELHLEMRVEGVVCKQVFKKVN.

Residues 22-32 (RALDVNVALRK) form an important for interaction with STRA6 region. All-trans-retinol contacts are provided by Lys-41, Met-63, and Gln-109.

The protein belongs to the calycin superfamily. Fatty-acid binding protein (FABP) family. As to quaternary structure, interacts (only as retinol-free apoprotein) with STRA6.

The protein localises to the cytoplasm. Its subcellular location is the lipid droplet. Cytoplasmic retinol-binding protein. Accepts retinol from the transport protein STRA6, and thereby contributes to retinol uptake, storage and retinoid homeostasis. The polypeptide is Retinol-binding protein 1 (RBP1) (Bos taurus (Bovine)).